The primary structure comprises 64 residues: Large ribosomal subunit protein bL35 (64 aa).

Disordered stretches follow at residues Met1–Ile22 and Glu34–Gly64. Over residues Glu34–Thr48 the composition is skewed to basic and acidic residues. The span at Val50 to Gly64 shows a compositional bias: polar residues.

This sequence belongs to the bacterial ribosomal protein bL35 family.

The polypeptide is Large ribosomal subunit protein bL35 (Mycobacterium leprae (strain Br4923)).